We begin with the raw amino-acid sequence, 258 residues long: SMH class II histocompatibility antigen, beta-1 chain (258 aa).

An N-terminal signal peptide occupies residues 1 to 29 (MMVLPVPVAPWTAALTVLLMVLNKSVVQG). Residues 30–121 (RTTPENYLFR…LNQRLSQSLI (92 aa)) are beta-1. The Extracellular portion of the chain corresponds to 30–225 (RTTPENYLFR…RAQSDSARNK (196 aa)). Intrachain disulfides connect cysteine 44–cysteine 106 and cysteine 144–cysteine 200. Residues 122-215 (AQPKVHVSPS…SLDRPITVEW (94 aa)) form a beta-2 region. One can recognise an Ig-like C1-type domain in the interval 124–212 (PKVHVSPSKG…EHPSLDRPIT (89 aa)). A connecting peptide region spans residues 216–225 (RAQSDSARNK). A glycan (N-linked (GlcNAc...) asparagine) is linked at asparagine 224. A helical transmembrane segment spans residues 226 to 246 (TLTGVGGLVLGLIFLAVGLIM). Over 247–258 (HVRSKKAQRGSR) the chain is Cytoplasmic.

It belongs to the MHC class II family.

It is found in the membrane. The sequence is that of SMH class II histocompatibility antigen, beta-1 chain from Spalax ehrenbergi (Middle East blind mole rat).